Consider the following 266-residue polypeptide: Large ribosomal subunit protein eL8 (266 aa).

A compositionally biased stretch (basic residues) spans 1–11; sequence MPKGKKAKGKK. Disordered regions lie at residues 1–28 and 105–134; these read MPKG…KKVV and ETKQ…KRPP. The segment covering 116–130 has biased composition (basic and acidic residues); sequence ARAEQKAAGKGDAPT.

It belongs to the eukaryotic ribosomal protein eL8 family. In terms of assembly, component of the large ribosomal subunit.

The protein resides in the cytoplasm. Functionally, component of the large ribosomal subunit. The ribosome is a large ribonucleoprotein complex responsible for the synthesis of proteins in the cell. The polypeptide is Large ribosomal subunit protein eL8 (rpl7a) (Takifugu rubripes (Japanese pufferfish)).